Reading from the N-terminus, the 78-residue chain is DNA-directed RNA polymerase subunit omega (78 aa).

It belongs to the RNA polymerase subunit omega family. In cyanobacteria the RNAP catalytic core is composed of 2 alpha, 1 beta, 1 beta', 1 gamma and 1 omega subunit. When a sigma factor is associated with the core the holoenzyme is formed, which can initiate transcription.

The catalysed reaction is RNA(n) + a ribonucleoside 5'-triphosphate = RNA(n+1) + diphosphate. In terms of biological role, promotes RNA polymerase assembly. Latches the N- and C-terminal regions of the beta' subunit thereby facilitating its interaction with the beta and alpha subunits. This is DNA-directed RNA polymerase subunit omega from Prochlorococcus marinus subsp. pastoris (strain CCMP1986 / NIES-2087 / MED4).